The following is a 201-amino-acid chain: Recombination protein RecR (201 aa).

The segment at Cys-57–Cys-72 adopts a C4-type zinc-finger fold. Residues Gly-81–Pro-176 form the Toprim domain.

It belongs to the RecR family.

Its function is as follows. May play a role in DNA repair. It seems to be involved in an RecBC-independent recombinational process of DNA repair. It may act with RecF and RecO. This Pectobacterium carotovorum subsp. carotovorum (strain PC1) protein is Recombination protein RecR.